A 377-amino-acid polypeptide reads, in one-letter code: Queuine tRNA-ribosyltransferase (377 aa).

Asp-89 serves as the catalytic Proton acceptor. Residues 89–93 (DSGGF), Asp-143, Gln-188, and Gly-215 contribute to the substrate site. The tract at residues 246–252 (GVGKPED) is RNA binding. Asp-265 acts as the Nucleophile in catalysis. An RNA binding; important for wobble base 34 recognition region spans residues 270–274 (TRNAR). 4 residues coordinate Zn(2+): Cys-303, Cys-305, Cys-308, and His-334.

The protein belongs to the queuine tRNA-ribosyltransferase family. In terms of assembly, homodimer. Within each dimer, one monomer is responsible for RNA recognition and catalysis, while the other monomer binds to the replacement base PreQ1. Zn(2+) is required as a cofactor.

It carries out the reaction 7-aminomethyl-7-carbaguanine + guanosine(34) in tRNA = 7-aminomethyl-7-carbaguanosine(34) in tRNA + guanine. Its pathway is tRNA modification; tRNA-queuosine biosynthesis. In terms of biological role, catalyzes the base-exchange of a guanine (G) residue with the queuine precursor 7-aminomethyl-7-deazaguanine (PreQ1) at position 34 (anticodon wobble position) in tRNAs with GU(N) anticodons (tRNA-Asp, -Asn, -His and -Tyr). Catalysis occurs through a double-displacement mechanism. The nucleophile active site attacks the C1' of nucleotide 34 to detach the guanine base from the RNA, forming a covalent enzyme-RNA intermediate. The proton acceptor active site deprotonates the incoming PreQ1, allowing a nucleophilic attack on the C1' of the ribose to form the product. After dissociation, two additional enzymatic reactions on the tRNA convert PreQ1 to queuine (Q), resulting in the hypermodified nucleoside queuosine (7-(((4,5-cis-dihydroxy-2-cyclopenten-1-yl)amino)methyl)-7-deazaguanosine). This Acinetobacter baumannii (strain SDF) protein is Queuine tRNA-ribosyltransferase.